The following is a 371-amino-acid chain: Queuine tRNA-ribosyltransferase (371 aa).

D90 serves as the catalytic Proton acceptor. Substrate is bound by residues 90–94 (DSGGF), D144, Q188, and G215. The tract at residues 246 to 252 (GVGTPED) is RNA binding. The active-site Nucleophile is the D265. Residues 270–274 (TRNAR) form an RNA binding; important for wobble base 34 recognition region. Zn(2+)-binding residues include C303, C305, C308, and H334.

This sequence belongs to the queuine tRNA-ribosyltransferase family. In terms of assembly, homodimer. Within each dimer, one monomer is responsible for RNA recognition and catalysis, while the other monomer binds to the replacement base PreQ1. Zn(2+) is required as a cofactor.

The catalysed reaction is 7-aminomethyl-7-carbaguanine + guanosine(34) in tRNA = 7-aminomethyl-7-carbaguanosine(34) in tRNA + guanine. It functions in the pathway tRNA modification; tRNA-queuosine biosynthesis. Functionally, catalyzes the base-exchange of a guanine (G) residue with the queuine precursor 7-aminomethyl-7-deazaguanine (PreQ1) at position 34 (anticodon wobble position) in tRNAs with GU(N) anticodons (tRNA-Asp, -Asn, -His and -Tyr). Catalysis occurs through a double-displacement mechanism. The nucleophile active site attacks the C1' of nucleotide 34 to detach the guanine base from the RNA, forming a covalent enzyme-RNA intermediate. The proton acceptor active site deprotonates the incoming PreQ1, allowing a nucleophilic attack on the C1' of the ribose to form the product. After dissociation, two additional enzymatic reactions on the tRNA convert PreQ1 to queuine (Q), resulting in the hypermodified nucleoside queuosine (7-(((4,5-cis-dihydroxy-2-cyclopenten-1-yl)amino)methyl)-7-deazaguanosine). The protein is Queuine tRNA-ribosyltransferase of Neisseria meningitidis serogroup C (strain 053442).